Consider the following 151-residue polypeptide: Ubiquitin-like protein 4A-B (151 aa).

Residues 1–76 (MILTIKPLQG…LNLVVRPAGE (76 aa)) enclose the Ubiquitin-like domain.

As to quaternary structure, component of the BAT3 complex.

Its subcellular location is the cytoplasm. It localises to the cytosol. Functionally, component of the BAT3 complex, a multiprotein complex involved in the post-translational delivery of tail-anchored (TA) membrane proteins to the endoplasmic reticulum membrane. TA membrane proteins, also named type II transmembrane proteins, contain a single C-terminal transmembrane region. This Salmo salar (Atlantic salmon) protein is Ubiquitin-like protein 4A-B (ubl4ab).